The following is a 40-amino-acid chain: Metallothionein-1 (40 aa).

This sequence belongs to the metallothionein superfamily. Type 5 family.

Its function is as follows. This protein binds cations of several transition elements. It is thought to be involved in detoxification processes. This Drosophila melanogaster (Fruit fly) protein is Metallothionein-1 (MtnA).